The primary structure comprises 734 residues: Photosystem I P700 chlorophyll a apoprotein A2 (734 aa).

8 helical membrane passes run 46-69, 135-158, 175-199, 273-291, 330-353, 369-395, 417-439, and 517-535; these read IFASHFGQLAIIFLWTSGNLFHVA, LYTGALFLLVGAAILLFAGWLHLQ, LNHHLAGLFGVSSLAWTGHLVHVAI, MAHHHLAIAVVFILAGHMY, LHFQLGLALASLGVITSLVAQHMY, SALYTHHQYIAGFIMTGAFAHGAIFFI, ALISHLSWVTLFLGFHTLGLYVH, and FLVHHAIALGLHTTTLILV. [4Fe-4S] cluster-binding residues include Cys-559 and Cys-568. Transmembrane regions (helical) follow at residues 575–596 and 643–665; these read AFYLAVFWMLNTIGWTTFYWHW and LSVWAWMFLFGHLVWATGFMFLI. Residues His-654, Met-662, and Tyr-670 each contribute to the chlorophyll a site. A phylloquinone-binding site is contributed by Trp-671. A helical membrane pass occupies residues 707-727; it reads LVGLAHFSVGYVFTYAAFVIA.

The protein belongs to the PsaA/PsaB family. In terms of assembly, the PsaA/B heterodimer binds the P700 chlorophyll special pair and subsequent electron acceptors. PSI consists of a core antenna complex that captures photons, and an electron transfer chain that converts photonic excitation into a charge separation. The eukaryotic PSI reaction center is composed of at least 11 subunits. The cofactor is P700 is a chlorophyll a/chlorophyll a' dimer, A0 is one or more chlorophyll a, A1 is one or both phylloquinones and FX is a shared 4Fe-4S iron-sulfur center..

It localises to the plastid. The protein resides in the chloroplast thylakoid membrane. It catalyses the reaction reduced [plastocyanin] + hnu + oxidized [2Fe-2S]-[ferredoxin] = oxidized [plastocyanin] + reduced [2Fe-2S]-[ferredoxin]. Its function is as follows. PsaA and PsaB bind P700, the primary electron donor of photosystem I (PSI), as well as the electron acceptors A0, A1 and FX. PSI is a plastocyanin/cytochrome c6-ferredoxin oxidoreductase, converting photonic excitation into a charge separation, which transfers an electron from the donor P700 chlorophyll pair to the spectroscopically characterized acceptors A0, A1, FX, FA and FB in turn. Oxidized P700 is reduced on the lumenal side of the thylakoid membrane by plastocyanin or cytochrome c6. In Nephroselmis olivacea (Green alga), this protein is Photosystem I P700 chlorophyll a apoprotein A2.